The sequence spans 270 residues: Putative carbamate hydrolase RutD (270 aa).

It belongs to the AB hydrolase superfamily. Hydrolase RutD family.

The catalysed reaction is carbamate + 2 H(+) = NH4(+) + CO2. Involved in pyrimidine catabolism. May facilitate the hydrolysis of carbamate, a reaction that can also occur spontaneously. This chain is Putative carbamate hydrolase RutD, found in Escherichia coli O44:H18 (strain 042 / EAEC).